A 252-amino-acid chain; its full sequence is Trans-aconitate 2-methyltransferase (252 aa).

This sequence belongs to the methyltransferase superfamily. Tam family.

The protein resides in the cytoplasm. The catalysed reaction is trans-aconitate + S-adenosyl-L-methionine = (E)-3-(methoxycarbonyl)pent-2-enedioate + S-adenosyl-L-homocysteine. Its function is as follows. Catalyzes the S-adenosylmethionine monomethyl esterification of trans-aconitate. This is Trans-aconitate 2-methyltransferase from Escherichia coli O17:K52:H18 (strain UMN026 / ExPEC).